Here is a 566-residue protein sequence, read N- to C-terminus: Proline--tRNA ligase 1 (566 aa).

It belongs to the class-II aminoacyl-tRNA synthetase family. ProS type 1 subfamily. In terms of assembly, homodimer.

The protein resides in the cytoplasm. It catalyses the reaction tRNA(Pro) + L-proline + ATP = L-prolyl-tRNA(Pro) + AMP + diphosphate. Functionally, catalyzes the attachment of proline to tRNA(Pro) in a two-step reaction: proline is first activated by ATP to form Pro-AMP and then transferred to the acceptor end of tRNA(Pro). As ProRS can inadvertently accommodate and process non-cognate amino acids such as alanine and cysteine, to avoid such errors it has two additional distinct editing activities against alanine. One activity is designated as 'pretransfer' editing and involves the tRNA(Pro)-independent hydrolysis of activated Ala-AMP. The other activity is designated 'posttransfer' editing and involves deacylation of mischarged Ala-tRNA(Pro). The misacylated Cys-tRNA(Pro) is not edited by ProRS. This is Proline--tRNA ligase 1 from Bacillus cereus (strain ZK / E33L).